Consider the following 125-residue polypeptide: Cytochrome c' (125 aa).

Arg10, Glu67, Cys116, Cys119, and His120 together coordinate heme c.

As to quaternary structure, homodimer. In terms of processing, binds 1 heme c group covalently per subunit.

In terms of biological role, cytochrome c' is the most widely occurring bacterial c-type cytochrome. Cytochromes c' are high-spin proteins and the heme has no sixth ligand. Their exact function is not known. This chain is Cytochrome c', found in Pararhodospirillum photometricum (Rhodospirillum photometricum).